Reading from the N-terminus, the 239-residue chain is Uridylate kinase (239 aa).

Residue 13 to 16 participates in ATP binding; the sequence is KVSG. Gly55 contributes to the UMP binding site. ATP contacts are provided by Gly56 and Arg60. UMP-binding positions include Asp75 and 136 to 143; that span reads TGNPFCTT. Positions 163, 164, 169, and 172 each coordinate ATP.

This sequence belongs to the UMP kinase family. Homohexamer.

The protein resides in the cytoplasm. It catalyses the reaction UMP + ATP = UDP + ADP. It functions in the pathway pyrimidine metabolism; CTP biosynthesis via de novo pathway; UDP from UMP (UMPK route): step 1/1. Inhibited by UTP. Functionally, catalyzes the reversible phosphorylation of UMP to UDP. The protein is Uridylate kinase of Rickettsia bellii (strain RML369-C).